Here is a 169-residue protein sequence, read N- to C-terminus: Ribosome maturation factor RimM (169 aa).

A PRC barrel domain is found at 97–169; that stretch reads EDEYYWTDLV…TITADWGLDY (73 aa).

The protein belongs to the RimM family. Binds ribosomal protein uS19.

It localises to the cytoplasm. In terms of biological role, an accessory protein needed during the final step in the assembly of 30S ribosomal subunit, possibly for assembly of the head region. Essential for efficient processing of 16S rRNA. May be needed both before and after RbfA during the maturation of 16S rRNA. It has affinity for free ribosomal 30S subunits but not for 70S ribosomes. This Neisseria meningitidis serogroup B (strain ATCC BAA-335 / MC58) protein is Ribosome maturation factor RimM.